A 342-amino-acid chain; its full sequence is MGSTCVRIAIDAMGGDHAPNEIVAGAVRASEELGVKVLLVGDPQQIASALPPKTNLERVEIVPAEEAIAMDEEPLNAVRRKRKASINVAMDLVKREQADAIFSAGHSGAAMASALLRLGRLPGVDRPAIGTVFPTIKAGKPVLILDVGANVDCRPKFLEQFAVIGSIYSQYVLGTGEPPKVGLLNIGEEDTKGNELALRTHQLLKDNPNINFIGNAEGRDVLSGEFDVIVCDGFVGNILLKFAEAIGGVILQILREELPQGLHGQIGTAILKPNLTRIKQRMDHAEHGGALLLGVSGVCLIGHGSSQAPSVFNAIRMAKEAVDNQVMQQLQSQYEILHSASD.

It belongs to the PlsX family. As to quaternary structure, homodimer. Probably interacts with PlsY.

The protein resides in the cytoplasm. It carries out the reaction a fatty acyl-[ACP] + phosphate = an acyl phosphate + holo-[ACP]. It participates in lipid metabolism; phospholipid metabolism. Functionally, catalyzes the reversible formation of acyl-phosphate (acyl-PO(4)) from acyl-[acyl-carrier-protein] (acyl-ACP). This enzyme utilizes acyl-ACP as fatty acyl donor, but not acyl-CoA. This chain is Phosphate acyltransferase, found in Trichormus variabilis (strain ATCC 29413 / PCC 7937) (Anabaena variabilis).